We begin with the raw amino-acid sequence, 351 residues long: Cardiolipin synthase (CMP-forming) (351 aa).

A disordered region spans residues 74-120 (PAPQLSASHQHQAQQQQQQTKQPQQPYDPQQDQVPSTSTASSSKPAA). Residues 76-120 (PQLSASHQHQAQQQQQQTKQPQQPYDPQQDQVPSTSTASSSKPAA) are compositionally biased toward low complexity. The next 5 helical transmembrane spans lie at 139 to 159 (PLIGYWLVQGHYEAATLALAV), 191 to 211 (VLIGCVAAALLMNGAMPGWVA), 251 to 271 (AAAAGAATGAANGVASGGGGG), 280 to 300 (PLLISKANTVLQLLLLGGYLL), and 321 to 341 (LIMGLELATAATTVASGLAYG).

The protein belongs to the CDP-alcohol phosphatidyltransferase class-I family. It depends on Mn(2+) as a cofactor.

It is found in the mitochondrion inner membrane. It catalyses the reaction a CDP-1,2-diacyl-sn-glycerol + a 1,2-diacyl-sn-glycero-3-phospho-(1'-sn-glycerol) = a cardiolipin + CMP + H(+). Functionally, catalyzes the synthesis of cardiolipin (CL) (diphosphatidylglycerol) by specifically transferring a phosphatidyl group from CDP-diacylglycerol to phosphatidylglycerol (PG). CL is a key phospholipid in mitochondrial membranes and plays important roles in maintaining the functional integrity and dynamics of mitochondria under both optimal and stress conditions. Cannot catalyze the phosphatidyl group transfer from one PG molecule to another to form CL. The chain is Cardiolipin synthase (CMP-forming) from Chlamydomonas reinhardtii (Chlamydomonas smithii).